We begin with the raw amino-acid sequence, 512 residues long: Ribose import ATP-binding protein RbsA (512 aa).

ABC transporter domains lie at 6–242 (LELR…VNRE) and 252–496 (VPAG…TGAQ). 38–45 (GENGAGKS) is a binding site for ATP.

This sequence belongs to the ABC transporter superfamily. Ribose importer (TC 3.A.1.2.1) family. In terms of assembly, the complex is composed of an ATP-binding protein (RbsA), two transmembrane proteins (RbsC) and a solute-binding protein (RbsB).

Its subcellular location is the cell inner membrane. The enzyme catalyses D-ribose(out) + ATP + H2O = D-ribose(in) + ADP + phosphate + H(+). Part of the ABC transporter complex RbsABC involved in ribose import. Responsible for energy coupling to the transport system. The polypeptide is Ribose import ATP-binding protein RbsA (Pseudomonas putida (strain ATCC 47054 / DSM 6125 / CFBP 8728 / NCIMB 11950 / KT2440)).